A 163-amino-acid polypeptide reads, in one-letter code: UPF0523 protein B (163 aa).

The protein belongs to the UPF0523 family.

The chain is UPF0523 protein B from Dictyostelium discoideum (Social amoeba).